Consider the following 130-residue polypeptide: Small ribosomal subunit protein uS8 (130 aa).

This sequence belongs to the universal ribosomal protein uS8 family. As to quaternary structure, part of the 30S ribosomal subunit. Contacts proteins S5 and S12.

One of the primary rRNA binding proteins, it binds directly to 16S rRNA central domain where it helps coordinate assembly of the platform of the 30S subunit. In Histophilus somni (strain 129Pt) (Haemophilus somnus), this protein is Small ribosomal subunit protein uS8.